Consider the following 1009-residue polypeptide: Type VII secretion system accessory factor EsaA (1009 aa).

A helical membrane pass occupies residues 7–27 (IYALIVTLIIIIAIVSMIFFV). The segment covering 680-697 (TFAEEPQEPKIDKGKNDE) has biased composition (basic and acidic residues). A disordered region spans residues 680 to 707 (TFAEEPQEPKIDKGKNDEFNTMSSNLDK). 5 helical membrane-spanning segments follow: residues 822–842 (ISPT…AYIF), 869–889 (VITS…VGLI), 903–923 (KFIL…TYLL), 928–948 (SIGM…MNNL), and 979–999 (IGLV…LNMF).

It belongs to the EsaA family. In terms of assembly, homodimer. Interacts with EssB.

It localises to the cell membrane. In terms of biological role, component of the type VII secretion system (Ess). Provides together with EssB and other components such as EssC and EssE a secretion plateform accross the cytoplasmic membrane in the host. This is Type VII secretion system accessory factor EsaA from Staphylococcus aureus (strain USA300).